A 404-amino-acid chain; its full sequence is Phosphoglycerate kinase (404 aa).

Substrate is bound by residues 26 to 28 (DFN), arginine 41, 64 to 67 (HLGR), arginine 124, and arginine 161. ATP is bound by residues lysine 212, glycine 301, glutamate 332, and 359-362 (GGDS).

Belongs to the phosphoglycerate kinase family. Monomer.

It localises to the cytoplasm. It catalyses the reaction (2R)-3-phosphoglycerate + ATP = (2R)-3-phospho-glyceroyl phosphate + ADP. It participates in carbohydrate degradation; glycolysis; pyruvate from D-glyceraldehyde 3-phosphate: step 2/5. The polypeptide is Phosphoglycerate kinase (Mesomycoplasma hyopneumoniae (strain 232) (Mycoplasma hyopneumoniae)).